The following is a 624-amino-acid chain: Chaperone protein HtpG (624 aa).

An a; substrate-binding region spans residues 1-336 (MNMKGQETRG…SNDLPLNVSR (336 aa)). Positions 337–552 (EILQDSRITQ…ADEMSTQMAK (216 aa)) are b. Residues 553–624 (LFAAAGQQAP…IRRMNQLLTA (72 aa)) are c.

This sequence belongs to the heat shock protein 90 family. Homodimer.

The protein localises to the cytoplasm. In terms of biological role, molecular chaperone. Has ATPase activity. The protein is Chaperone protein HtpG of Yersinia pestis bv. Antiqua (strain Antiqua).